The primary structure comprises 250 residues: Adenosylcobinamide-GDP ribazoletransferase (250 aa).

The next 6 membrane-spanning stretches (helical) occupy residues 31 to 51 (ISYL…VYFV), 55 to 75 (FILG…ITGA), 106 to 126 (VGTN…AVLN), 133 to 153 (IIIA…LLMC), 187 to 207 (IGYV…VLFI), and 230 to 250 (NEIA…CGLL).

It belongs to the CobS family. It depends on Mg(2+) as a cofactor.

Its subcellular location is the cell membrane. It carries out the reaction alpha-ribazole + adenosylcob(III)inamide-GDP = adenosylcob(III)alamin + GMP + H(+). It catalyses the reaction alpha-ribazole 5'-phosphate + adenosylcob(III)inamide-GDP = adenosylcob(III)alamin 5'-phosphate + GMP + H(+). It participates in cofactor biosynthesis; adenosylcobalamin biosynthesis; adenosylcobalamin from cob(II)yrinate a,c-diamide: step 7/7. In terms of biological role, joins adenosylcobinamide-GDP and alpha-ribazole to generate adenosylcobalamin (Ado-cobalamin). Also synthesizes adenosylcobalamin 5'-phosphate from adenosylcobinamide-GDP and alpha-ribazole 5'-phosphate. The polypeptide is Adenosylcobinamide-GDP ribazoletransferase (Clostridium novyi (strain NT)).